Here is a 360-residue protein sequence, read N- to C-terminus: Luc7-like protein (360 aa).

A coiled-coil region spans residues 143 to 206; it reads KEQNSKITEL…QEKNENKRMS (64 aa). A disordered region spans residues 255–360; the sequence is LGRTDFYNAP…DDRRKRDRNY (106 aa). Residues 269 to 293 show a composition bias toward basic and acidic residues; it reads DSYRDDRRSSSSSYHDIDGRRDHRY. A compositionally biased stretch (low complexity) spans 312–321; that stretch reads NNGRGSSRDN. Basic and acidic residues predominate over residues 329-360; it reads RDYRNDHGKDYDRKRERDYYNDDDRRKRDRNY.

The protein belongs to the Luc7 family.

It localises to the nucleus. Its function is as follows. May play a role in RNA splicing. In Dictyostelium discoideum (Social amoeba), this protein is Luc7-like protein (crop).